Here is a 177-residue protein sequence, read N- to C-terminus: ATP synthase subunit delta (177 aa).

The protein belongs to the ATPase delta chain family. F-type ATPases have 2 components, F(1) - the catalytic core - and F(0) - the membrane proton channel. F(1) has five subunits: alpha(3), beta(3), gamma(1), delta(1), epsilon(1). F(0) has three main subunits: a(1), b(2) and c(10-14). The alpha and beta chains form an alternating ring which encloses part of the gamma chain. F(1) is attached to F(0) by a central stalk formed by the gamma and epsilon chains, while a peripheral stalk is formed by the delta and b chains.

It is found in the cell inner membrane. Functionally, f(1)F(0) ATP synthase produces ATP from ADP in the presence of a proton or sodium gradient. F-type ATPases consist of two structural domains, F(1) containing the extramembraneous catalytic core and F(0) containing the membrane proton channel, linked together by a central stalk and a peripheral stalk. During catalysis, ATP synthesis in the catalytic domain of F(1) is coupled via a rotary mechanism of the central stalk subunits to proton translocation. In terms of biological role, this protein is part of the stalk that links CF(0) to CF(1). It either transmits conformational changes from CF(0) to CF(1) or is implicated in proton conduction. The chain is ATP synthase subunit delta from Neisseria gonorrhoeae (strain NCCP11945).